Reading from the N-terminus, the 171-residue chain is Large ribosomal subunit protein uL24 (171 aa).

The segment at 1-124 (MNIKTGDTVV…AKPAKTKAEK (124 aa)) is large ribosomal subunit protein uL24. The interval 108-171 (GQTLDKAAKP…SVQKKGASGK (64 aa)) is disordered. The tract at residues 125–171 (VEKAATSSTDKPAKVTKAAKEAKPVKAVKSQKVEKNTSVQKKGASGK) is unknown.

Belongs to the universal ribosomal protein uL24 family. In terms of assembly, part of the 50S ribosomal subunit.

Functionally, one of two assembly initiator proteins, it binds directly to the 5'-end of the 23S rRNA, where it nucleates assembly of the 50S subunit. One of the proteins that surrounds the polypeptide exit tunnel on the outside of the subunit. This Acholeplasma laidlawii (strain PG-8A) protein is Large ribosomal subunit protein uL24.